Here is a 465-residue protein sequence, read N- to C-terminus: Fumarate hydratase class II (465 aa).

Substrate-binding positions include Ser99–Thr101, His130–Asp133, Ser140–Asn142, and Thr188. His189 acts as the Proton donor/acceptor in catalysis. Ser319 is a catalytic residue. Substrate is bound by residues Ser320 and Lys325 to Asn327.

Belongs to the class-II fumarase/aspartase family. Fumarase subfamily. Homotetramer.

It localises to the cytoplasm. The enzyme catalyses (S)-malate = fumarate + H2O. It functions in the pathway carbohydrate metabolism; tricarboxylic acid cycle; (S)-malate from fumarate: step 1/1. Functionally, involved in the TCA cycle. Catalyzes the stereospecific interconversion of fumarate to L-malate. The protein is Fumarate hydratase class II of Prochlorococcus marinus (strain SARG / CCMP1375 / SS120).